A 174-amino-acid chain; its full sequence is Translation initiation factor IF-3 (174 aa).

The protein belongs to the IF-3 family. As to quaternary structure, monomer.

It localises to the cytoplasm. Its function is as follows. IF-3 binds to the 30S ribosomal subunit and shifts the equilibrium between 70S ribosomes and their 50S and 30S subunits in favor of the free subunits, thus enhancing the availability of 30S subunits on which protein synthesis initiation begins. The chain is Translation initiation factor IF-3 from Helicobacter hepaticus (strain ATCC 51449 / 3B1).